Reading from the N-terminus, the 147-residue chain is Deoxyuridine 5'-triphosphate nucleotidohydrolase (147 aa).

Residue Arg-24 coordinates Mg(2+). DUTP-binding positions include 68–70, 82–85, Tyr-88, Gly-93, Ile-95, and Arg-111; these read PRS and GVID.

This sequence belongs to the dUTPase family. Mg(2+) is required as a cofactor.

It carries out the reaction dUTP + H2O = dUMP + diphosphate + H(+). In terms of biological role, this enzyme is involved in nucleotide metabolism: it produces dUMP, the immediate precursor of thymidine nucleotides and it decreases the intracellular concentration of dUTP so that uracil cannot be incorporated into DNA. In Oryctolagus cuniculus (Rabbit), this protein is Deoxyuridine 5'-triphosphate nucleotidohydrolase (OPG046).